We begin with the raw amino-acid sequence, 545 residues long: CTP synthase (545 aa).

Positions 1–265 (MNGIKHIFIT…DKFVIKHLDL (265 aa)) are amidoligase domain. Position 15 (serine 15) interacts with CTP. Serine 15 serves as a coordination point for UTP. ATP is bound by residues 16-21 (SIGKGL) and aspartate 73. Mg(2+)-binding residues include aspartate 73 and glutamate 141. Residues 148-150 (DIE), 188-193 (KTKPTQ), and lysine 224 contribute to the CTP site. UTP contacts are provided by residues 188-193 (KTKPTQ) and lysine 224. One can recognise a Glutamine amidotransferase type-1 domain in the interval 290–534 (EIAIIGKYTG…VAAALARKEI (245 aa)). Glycine 349 contributes to the L-glutamine binding site. Cysteine 376 serves as the catalytic Nucleophile; for glutamine hydrolysis. L-glutamine is bound by residues 377–380 (LGMQ), glutamate 400, and arginine 460. Catalysis depends on residues histidine 507 and glutamate 509.

The protein belongs to the CTP synthase family. As to quaternary structure, homotetramer.

It catalyses the reaction UTP + L-glutamine + ATP + H2O = CTP + L-glutamate + ADP + phosphate + 2 H(+). The catalysed reaction is L-glutamine + H2O = L-glutamate + NH4(+). It carries out the reaction UTP + NH4(+) + ATP = CTP + ADP + phosphate + 2 H(+). The protein operates within pyrimidine metabolism; CTP biosynthesis via de novo pathway; CTP from UDP: step 2/2. Its activity is regulated as follows. Allosterically activated by GTP, when glutamine is the substrate; GTP has no effect on the reaction when ammonia is the substrate. The allosteric effector GTP functions by stabilizing the protein conformation that binds the tetrahedral intermediate(s) formed during glutamine hydrolysis. Inhibited by the product CTP, via allosteric rather than competitive inhibition. Catalyzes the ATP-dependent amination of UTP to CTP with either L-glutamine or ammonia as the source of nitrogen. Regulates intracellular CTP levels through interactions with the four ribonucleotide triphosphates. The sequence is that of CTP synthase from Tropheryma whipplei (strain TW08/27) (Whipple's bacillus).